A 100-amino-acid polypeptide reads, in one-letter code: Apolipoprotein C-II (100 aa).

The first 22 residues, 1 to 22, serve as a signal peptide directing secretion; it reads MSSQFLLAFFLVLLVLGYEVQG. Residues 66–74 form a lipid binding region; sequence SVDEKLRDM. A lipoprotein lipase cofactor region spans residues 78-100; the sequence is SSAAMSTYAGIFTDQLFTLLKGE.

Belongs to the apolipoprotein C2 family. Post-translationally, proapolipoprotein C-II is synthesized as a sialic acid containing glycoprotein which is subsequently desialylated prior to its proteolytic processing. Proapolipoprotein C-II, the major form found in plasma undergoes proteolytic cleavage of its N-terminal hexapeptide to generate the mature form apolipoprotein C-II, which occurs as the minor form in plasma.

Its subcellular location is the secreted. Functionally, component of chylomicrons, very low-density lipoproteins (VLDL), low-density lipoproteins (LDL), and high-density lipoproteins (HDL) in plasma. Plays an important role in lipoprotein metabolism as an activator of lipoprotein lipase. The sequence is that of Apolipoprotein C-II (APOC2) from Cricetulus griseus (Chinese hamster).